Reading from the N-terminus, the 1066-residue chain is MIKEPEFRDYTPGKLEEKIEQFWKESNIYQKVKELRKNGPKYYFLDGPPYVSGAIHLGTAWNKIIKDMIIRFRTMQGYNVWRQPGYDMHGLPIEVKVEQALGLKTKKEIEEKIGVENFIQKCKEFALNNLRIMTEQFKMLGVWMDWDNPYMTIKNEYIESAWFTLKRAWEKGLLEKDKRVLHWCPRCETALAEHEVRGEYKLRKDPSIYVKFPVEGKENEYLLIWTTTPWTLPANLAVSAHPDYDYVKVRVDLNGREEYWILAKALVEKVLGDIGVKGEVVEEFKGKELEGLRYVHILMDEYPRQKEFREKYEWVHRVILADFVTLEEGTGLVHTAPGHGEEDFEVGQKYGLPVYSPVDDQGKYVEGKWKGVYVKEADPQIIEHLKEKGYLVKAGEIEHKYPHCWRCKTPLIFRATDQWFLKVSKVKEKIIKENDEKVTWYPEWVKIRFDNGVRDSGDWVISRQRYWGIPLPIWQSEDGEIYVVGSWKELVELAVAIEVNGERIDLPESYEEKLKVIEEKLGPEDLHRPYVDAFIIKVNGKEMRRVKDVVDVWFDSGIASWASLGYPRNKELFEKLWPADFIVEGEDQVTKWFYSQQAASVIAFDTVPYRAVAMHGYVLDEKGDKMSKSLGNIIRPEEVVEKAGRDTFRFYMLWATNPWENLKFSWKGVEQVRRMLNILWNVYVLSATYMSLDNFDPRNVKVEELEFREEDKWILSRVNNLIKEVENGIETFYLTKATRALYNFVVEDLSRWYVRLIRKRLWVEGDDPDKLAAYYTLWKVFDVLLRLMAPFTPYITEEIYQNIMRPFTGIESVHMLDWPKPDESAVDEELEREMEFIRRIVEAGSAARQKAKIKLRYPVRKIIIETQDDTVKKAVERLNYILRDQLNAKEVVVGNVEREITVKPNFAKVGPEFKGDARLVAKWISEHGLELYEKGEVDVEIEGKKFHLTREHIIVEENIPDFLVAEDFEGGRVYVDKTLTRELLAEGLAREFVRRIQEMRKRLDLDVNDRIVVTIETTEENRELLQENLEYIMRETRAIEVRFEEAKGYVVEWPEVQAKIGIEKIE.

The 'HIGH' region motif lies at 49–59 (PYVSGAIHLGT). Positions 625–629 (KMSKS) match the 'KMSKS' region motif. ATP is bound at residue lysine 628.

Belongs to the class-I aminoacyl-tRNA synthetase family. IleS type 2 subfamily. In terms of assembly, monomer. Requires Zn(2+) as cofactor.

It localises to the cytoplasm. It catalyses the reaction tRNA(Ile) + L-isoleucine + ATP = L-isoleucyl-tRNA(Ile) + AMP + diphosphate. Its function is as follows. Catalyzes the attachment of isoleucine to tRNA(Ile). As IleRS can inadvertently accommodate and process structurally similar amino acids such as valine, to avoid such errors it has two additional distinct tRNA(Ile)-dependent editing activities. One activity is designated as 'pretransfer' editing and involves the hydrolysis of activated Val-AMP. The other activity is designated 'posttransfer' editing and involves deacylation of mischarged Val-tRNA(Ile). The sequence is that of Isoleucine--tRNA ligase from Pyrococcus furiosus (strain ATCC 43587 / DSM 3638 / JCM 8422 / Vc1).